We begin with the raw amino-acid sequence, 96 residues long: MTIRPLHDRVVVKRLEAEEKTASGIVLPGAAAEKPDMGEVIAVGAGKIGKDGSRRPLDVKVGDKIIFGKYSGQTVKADGEELLVMREEDIFGIVEK.

Belongs to the GroES chaperonin family. Heptamer of 7 subunits arranged in a ring. Interacts with the chaperonin GroEL.

The protein localises to the cytoplasm. Together with the chaperonin GroEL, plays an essential role in assisting protein folding. The GroEL-GroES system forms a nano-cage that allows encapsulation of the non-native substrate proteins and provides a physical environment optimized to promote and accelerate protein folding. GroES binds to the apical surface of the GroEL ring, thereby capping the opening of the GroEL channel. The chain is Co-chaperonin GroES from Neisseria meningitidis serogroup B (strain ATCC BAA-335 / MC58).